The following is a 101-amino-acid chain: Integration host factor subunit alpha (101 aa).

The protein belongs to the bacterial histone-like protein family. Heterodimer of an alpha and a beta chain.

This protein is one of the two subunits of integration host factor, a specific DNA-binding protein that functions in genetic recombination as well as in transcriptional and translational control. The sequence is that of Integration host factor subunit alpha from Saccharophagus degradans (strain 2-40 / ATCC 43961 / DSM 17024).